We begin with the raw amino-acid sequence, 200 residues long: NAD(P)H dehydrogenase (quinone) (200 aa).

The Flavodoxin-like domain maps to 4–191 (VLVLYYSSYG…DIARYQGKHV (188 aa)). FMN is bound by residues 10 to 15 (SSYGHV) and 79 to 81 (TRF). Y12 is an NAD(+) binding site. W99 serves as a coordination point for substrate. Residues 114-120 (STGTQHG) and H135 contribute to the FMN site.

Belongs to the WrbA family. Requires FMN as cofactor.

It carries out the reaction a quinone + NADH + H(+) = a quinol + NAD(+). The catalysed reaction is a quinone + NADPH + H(+) = a quinol + NADP(+). This chain is NAD(P)H dehydrogenase (quinone), found in Burkholderia orbicola (strain MC0-3).